A 126-amino-acid polypeptide reads, in one-letter code: MTATAFVAIGGGIGAVLRFHAGRLATAIAGPNAVFPWGTFAINVVGSLLMGVLAGWLARSGGGESLRLMLGVGVLGGFTTFSAFSLETALLVQRGTIGLAALYAAGSVVAGVTGLFLGLSIMRGVA.

Helical transmembrane passes span 1–21 (MTATAFVAIGGGIGAVLRFHA), 33–53 (AVFPWGTFAINVVGSLLMGVL), 72–92 (VGVLGGFTTFSAFSLETALLV), and 97–117 (IGLAALYAAGSVVAGVTGLFL). Residues G76 and T79 each coordinate Na(+).

This sequence belongs to the fluoride channel Fluc/FEX (TC 1.A.43) family.

It is found in the cell inner membrane. It catalyses the reaction fluoride(in) = fluoride(out). Its activity is regulated as follows. Na(+) is not transported, but it plays an essential structural role and its presence is essential for fluoride channel function. In terms of biological role, fluoride-specific ion channel. Important for reducing fluoride concentration in the cell, thus reducing its toxicity. The chain is Fluoride-specific ion channel FluC from Novosphingobium aromaticivorans (strain ATCC 700278 / DSM 12444 / CCUG 56034 / CIP 105152 / NBRC 16084 / F199).